Consider the following 234-residue polypeptide: MNEATSHEGPKRSLPGRPPGIRADSSGLTDRQRRVIEVIRDSVQRRGYPPSMREIGQAVGLSSTSSVAHQLMALERKGFLRRDPHRPRAYEVRGSDQSSSVQPTDTAGKPAASYVPLVGRIAAGGPILAEESVEDVFPLPRQLVGDGELFVLKVVGDSMIEAAICDGDWVTVRRQPVAENGDIVAAMLDGEATVKRFKREDGHVWLLPHNSAYQPIPGDEATILGKVVAVLRRV.

Residues 1–11 show a composition bias toward basic and acidic residues; sequence MNEATSHEGPK. The disordered stretch occupies residues 1–34; the sequence is MNEATSHEGPKRSLPGRPPGIRADSSGLTDRQRR. The segment at residues 52–72 is a DNA-binding region (H-T-H motif); it reads MREIGQAVGLSSTSSVAHQLM. A compositionally biased stretch (basic and acidic residues) spans 83–94; that stretch reads DPHRPRAYEVRG. Residues 83–109 form a disordered region; it reads DPHRPRAYEVRGSDQSSSVQPTDTAGK. The span at 95-105 shows a compositional bias: polar residues; the sequence is SDQSSSVQPTD. Residues S158 and K195 each act as for autocatalytic cleavage activity in the active site.

The protein belongs to the peptidase S24 family. In terms of assembly, homodimer.

It carries out the reaction Hydrolysis of Ala-|-Gly bond in repressor LexA.. Represses a number of genes involved in the response to DNA damage (SOS response), including recA and lexA. In the presence of single-stranded DNA, RecA interacts with LexA causing an autocatalytic cleavage which disrupts the DNA-binding part of LexA, leading to derepression of the SOS regulon and eventually DNA repair. This Streptomyces avermitilis (strain ATCC 31267 / DSM 46492 / JCM 5070 / NBRC 14893 / NCIMB 12804 / NRRL 8165 / MA-4680) protein is LexA repressor.